A 386-amino-acid polypeptide reads, in one-letter code: Ovalbumin (386 aa).

G2 is subject to N-acetylglycine. Positions 22–48 (HHANENIFYSPFTIISALAMVYLGAKD) form a signal peptide, not cleaved. S69 carries the phosphoserine modification. C74 and C121 are joined by a disulfide. N-linked (GlcNAc...) asparagine glycans are attached at residues N293 and N312. S345 is subject to Phosphoserine. N372 is a glycosylation site (N-linked (GlcNAc...) asparagine).

The protein belongs to the serpin family. Ov-serpin subfamily. Post-translationally, the signal sequence is not cleaved. The functional signal for membrane translocation of ovalbumin becomes accessible when the nascent chain is 50 to 60 residues long. The hydrophobic sequence which lies between residues 27 and 43 folds back on the preceding residues to form an amphipathic hairpin structure which is the signal element recognized by the membrane. Major protein of egg white.

Its subcellular location is the secreted. Functionally, storage protein of egg white. Lack protease inhibitory activity. The chain is Ovalbumin (SERPINB14) from Meleagris gallopavo (Wild turkey).